A 191-amino-acid polypeptide reads, in one-letter code: Large ribosomal subunit protein uL5 (191 aa).

The protein belongs to the universal ribosomal protein uL5 family. As to quaternary structure, part of the 50S ribosomal subunit; part of the 5S rRNA/L5/L18/L25 subcomplex. Contacts the 5S rRNA and the P site tRNA. Forms a bridge to the 30S subunit in the 70S ribosome.

Its function is as follows. This is one of the proteins that bind and probably mediate the attachment of the 5S RNA into the large ribosomal subunit, where it forms part of the central protuberance. In the 70S ribosome it contacts protein S13 of the 30S subunit (bridge B1b), connecting the 2 subunits; this bridge is implicated in subunit movement. Contacts the P site tRNA; the 5S rRNA and some of its associated proteins might help stabilize positioning of ribosome-bound tRNAs. The polypeptide is Large ribosomal subunit protein uL5 (Micrococcus luteus (Micrococcus lysodeikticus)).